The following is a 400-amino-acid chain: Large envelope protein (400 aa).

Methionine 1 is modified (N-acetylmethionine). Disordered regions lie at residues 1–20 (MGGW…SVPN) and 89–115 (STIP…LRDS). Glycine 2 is lipidated: N-myristoyl glycine; by host. The tract at residues 2–119 (GGWSSKPRKG…PPLRDSHPQA (118 aa)) is pre-S1. Residues 2–174 (GGWSSKPRKG…SARTGDPVTN (173 aa)) are pre-S. At 2–181 (GGWSSKPRKG…VTNMENITSG (180 aa)) the chain is on the virion surface; in external conformation side. Residues 2–253 (GGWSSKPRKG…PGYRWMCLRR (252 aa)) lie on the Intravirion; in internal conformation side of the membrane. Tryptophan 4 carries an N-linked (GlcNAc...) asparagine glycan. Residues 89–106 (STIPPPASTNRQSGRQPT) show a composition bias toward polar residues. The segment at 120 to 174 (MQWNSTAFHQTLQDPRVRGLYLPAGGSSSGTVNPAPNIASHISSISARTGDPVTN) is pre-S2. The chain crosses the membrane as a helical span at residues 182–202 (FLGPLLVLQAGFFLLTRILTI). The Intravirion; in external conformation portion of the chain corresponds to 203–253 (PQSLDSWWTSLNFLGGSPVCLGQNSQSPTSNHSPTSCPPICPGYRWMCLRR). The helical transmembrane segment at 254–274 (FIIFLFILLLCLIFLLVLLDY) threads the bilayer. Over 275–348 (QGMLPVCPLI…WASVRFSWLS (74 aa)) the chain is Virion surface. A glycan (N-linked (GlcNAc...) asparagine; by host; partial) is linked at asparagine 320. Residues 349-369 (LLVPFVQWFVGLSPTVWLSAI) traverse the membrane as a helical segment. At 370-375 (WMMWYW) the chain is on the intravirion side. The chain crosses the membrane as a helical span at residues 376–398 (GPSLYSIVSPFIPLLPIFFCLWV). At 399-400 (YI) the chain is on the virion surface side.

This sequence belongs to the orthohepadnavirus major surface antigen family. In terms of assembly, in its internal form (Li-HBsAg), interacts with the capsid protein and with the isoform S. Interacts with host chaperone CANX. As to quaternary structure, associates with host chaperone CANX through its pre-S2 N glycan; this association may be essential for isoform M proper secretion. Interacts with isoform L. Interacts with the antigens of satellite virus HDV (HDVAgs); this interaction is required for encapsidation of HDV genomic RNA. Post-translationally, isoform M is N-terminally acetylated by host at a ratio of 90%, and N-glycosylated by host at the pre-S2 region. In terms of processing, myristoylated.

Its subcellular location is the virion membrane. The large envelope protein exists in two topological conformations, one which is termed 'external' or Le-HBsAg and the other 'internal' or Li-HBsAg. In its external conformation the protein attaches the virus to cell receptors and thereby initiating infection. This interaction determines the species specificity and liver tropism. This attachment induces virion internalization predominantly through caveolin-mediated endocytosis. The large envelope protein also assures fusion between virion membrane and endosomal membrane. In its internal conformation the protein plays a role in virion morphogenesis and mediates the contact with the nucleocapsid like a matrix protein. Functionally, the middle envelope protein plays an important role in the budding of the virion. It is involved in the induction of budding in a nucleocapsid independent way. In this process the majority of envelope proteins bud to form subviral lipoprotein particles of 22 nm of diameter that do not contain a nucleocapsid. This is Large envelope protein from Hepatitis B virus genotype A2 subtype adw2 (strain Rutter 1979) (HBV-A).